The chain runs to 173 residues: Putative metal-dependent hydrolase BC_2708 (173 aa).

Zn(2+) contacts are provided by His-65, His-156, and His-160.

It belongs to the metal hydrolase YfiT family. As to quaternary structure, homodimer. The cofactor is Zn(2+).

It localises to the cytoplasm. Possible metal-dependent hydrolase. The sequence is that of Putative metal-dependent hydrolase BC_2708 from Bacillus cereus (strain ATCC 14579 / DSM 31 / CCUG 7414 / JCM 2152 / NBRC 15305 / NCIMB 9373 / NCTC 2599 / NRRL B-3711).